The sequence spans 502 residues: Protein Dok-7 (502 aa).

The 106-residue stretch at Ser-4 to Gly-109 folds into the PH domain. The region spanning Arg-105–Phe-210 is the IRS-type PTB domain. Disordered regions lie at residues Phe-210 to His-232, Ser-249 to Ser-279, Thr-291 to Ser-358, and Glu-418 to Gly-482. 2 stretches are compositionally biased toward low complexity: residues Ile-264–Ser-279 and Ala-301–Ser-316. The span at Gly-336–Ala-346 shows a compositional bias: polar residues. Residues Thr-347–Ser-358 show a composition bias toward low complexity. The span at Pro-459–Ser-473 shows a compositional bias: basic and acidic residues.

It is found in the cell membrane. The protein localises to the synapse. In terms of biological role, probable muscle-intrinsic activator of MUSK that plays an essential role in neuromuscular synaptogenesis. Acts in aneural activation of MUSK and subsequent acetylcholine receptor (AchR) clustering in myotubes. The chain is Protein Dok-7 (dok7) from Takifugu rubripes (Japanese pufferfish).